Reading from the N-terminus, the 405-residue chain is S-adenosylmethionine synthase (405 aa).

ATP is bound at residue 141–146; that stretch reads GQGSVD.

It belongs to the AdoMet synthase 2 family. Mg(2+) serves as cofactor.

It carries out the reaction L-methionine + ATP + H2O = S-adenosyl-L-methionine + phosphate + diphosphate. The protein operates within amino-acid biosynthesis; S-adenosyl-L-methionine biosynthesis; S-adenosyl-L-methionine from L-methionine: step 1/1. In terms of biological role, catalyzes the formation of S-adenosylmethionine from methionine and ATP. This Methanococcus maripaludis (strain C5 / ATCC BAA-1333) protein is S-adenosylmethionine synthase.